A 575-amino-acid polypeptide reads, in one-letter code: uncharacterized protein (575 aa).

It localises to the cytoplasm. The protein resides in the cytoskeleton. It is found in the microtubule organizing center. Its subcellular location is the spindle pole body. This is an uncharacterized protein from Schizosaccharomyces pombe (strain 972 / ATCC 24843) (Fission yeast).